Here is a 496-residue protein sequence, read N- to C-terminus: 2,3-bisphosphoglycerate-independent phosphoglycerate mutase (496 aa).

2 residues coordinate Mn(2+): aspartate 12 and serine 62. Serine 62 serves as the catalytic Phosphoserine intermediate. Substrate contacts are provided by residues histidine 121, 150–151, arginine 181, arginine 187, 252–255, and lysine 317; these read RD and RNDR. Residues aspartate 384, histidine 388, aspartate 425, histidine 426, and histidine 444 each coordinate Mn(2+).

The protein belongs to the BPG-independent phosphoglycerate mutase family. In terms of assembly, monomer. It depends on Mn(2+) as a cofactor.

The catalysed reaction is (2R)-2-phosphoglycerate = (2R)-3-phosphoglycerate. It functions in the pathway carbohydrate degradation; glycolysis; pyruvate from D-glyceraldehyde 3-phosphate: step 3/5. In terms of biological role, catalyzes the interconversion of 2-phosphoglycerate and 3-phosphoglycerate. The polypeptide is 2,3-bisphosphoglycerate-independent phosphoglycerate mutase (Anaplasma phagocytophilum (strain HZ)).